A 357-amino-acid chain; its full sequence is S-adenosylmethionine:tRNA ribosyltransferase-isomerase (357 aa).

The protein belongs to the QueA family. In terms of assembly, monomer.

It localises to the cytoplasm. The catalysed reaction is 7-aminomethyl-7-carbaguanosine(34) in tRNA + S-adenosyl-L-methionine = epoxyqueuosine(34) in tRNA + adenine + L-methionine + 2 H(+). It functions in the pathway tRNA modification; tRNA-queuosine biosynthesis. Its function is as follows. Transfers and isomerizes the ribose moiety from AdoMet to the 7-aminomethyl group of 7-deazaguanine (preQ1-tRNA) to give epoxyqueuosine (oQ-tRNA). This Hamiltonella defensa subsp. Acyrthosiphon pisum (strain 5AT) protein is S-adenosylmethionine:tRNA ribosyltransferase-isomerase.